The sequence spans 327 residues: MLTVPQQTIRSGCKINLFLEITGVRPDGYHELVTLFYPLSEPFDLMEISPATHGVTVLSERADLCGDKNIICKAWHTFAAAGGTPPPMQVRLAKGVPDGAGLGGGSANAAAVLKLLNTAGGAPRFSDTALAKIAAQVGADVPFFLHNTPCLATGIGEKLVPAPLDLSGWHLVLVCPGVQVSTPWAYNRWDTLYRSGLHHPCGQLPAAHAPAACAQLQTTGPDRPVRAETGCAGRKKNTCRSLTTERQADSKPVSRALWLFNSFETVVFSAYSELRQHKNTLLAHGASAALMSGSGSSLFGLFRDKAQAEAAMLHFCQRSIAVYVHRL.

K14 is an active-site residue. 97-107 is a binding site for ATP; that stretch reads PDGAGLGGGSA. D140 is an active-site residue.

It belongs to the GHMP kinase family. IspE subfamily.

The enzyme catalyses 4-CDP-2-C-methyl-D-erythritol + ATP = 4-CDP-2-C-methyl-D-erythritol 2-phosphate + ADP + H(+). Its pathway is isoprenoid biosynthesis; isopentenyl diphosphate biosynthesis via DXP pathway; isopentenyl diphosphate from 1-deoxy-D-xylulose 5-phosphate: step 3/6. Its function is as follows. Catalyzes the phosphorylation of the position 2 hydroxy group of 4-diphosphocytidyl-2C-methyl-D-erythritol. The chain is 4-diphosphocytidyl-2-C-methyl-D-erythritol kinase from Oleidesulfovibrio alaskensis (strain ATCC BAA-1058 / DSM 17464 / G20) (Desulfovibrio alaskensis).